The following is a 365-amino-acid chain: Chorismate synthase (365 aa).

NADP(+) contacts are provided by R48 and R54. FMN is bound by residues 131–133 (RSS), 243–244 (NA), G288, 303–307 (KPTSS), and R329.

It belongs to the chorismate synthase family. Homotetramer. FMNH2 serves as cofactor.

The enzyme catalyses 5-O-(1-carboxyvinyl)-3-phosphoshikimate = chorismate + phosphate. Its pathway is metabolic intermediate biosynthesis; chorismate biosynthesis; chorismate from D-erythrose 4-phosphate and phosphoenolpyruvate: step 7/7. Its function is as follows. Catalyzes the anti-1,4-elimination of the C-3 phosphate and the C-6 proR hydrogen from 5-enolpyruvylshikimate-3-phosphate (EPSP) to yield chorismate, which is the branch point compound that serves as the starting substrate for the three terminal pathways of aromatic amino acid biosynthesis. This reaction introduces a second double bond into the aromatic ring system. This is Chorismate synthase from Sinorhizobium medicae (strain WSM419) (Ensifer medicae).